The chain runs to 715 residues: SEC14-like protein 1 (715 aa).

Residues 1-510 (MVQKYQSPVR…VPKSLYRTAE (510 aa)) form a required for interaction and inhibitory function toward RIGI region. One can recognise a PRELI/MSF1 domain in the interval 3 to 175 (QKYQSPVRVY…YLRQLEEEGI (173 aa)). Thr234 is modified (phosphothreonine). The CRAL-TRIO domain occupies 319-495 (PPQVLLDYYA…FLSGECMCDV (177 aa)). Positions 521–674 (TETIYQSASV…KCKVMYYTEV (154 aa)) constitute a GOLD domain. Ser586 is modified (phosphoserine).

Interacts with RIGI (via tandem CARD domain); the interaction is direct. Interacts (via GOLD domain) with SLC18A3; the interaction is direct. Interacts with SLC5A7 (via GOLD domain); the interaction is direct.

Its subcellular location is the cytoplasm. The protein localises to the golgi apparatus. Its function is as follows. May play a role in innate immunity by inhibiting the antiviral RIG-I signaling pathway. In this pathway, functions as a negative regulator of RIGI, the cytoplasmic sensor of viral nucleic acids. Prevents the interaction of RIGI with MAVS/IPS1, an important step in signal propagation. May also regulate the SLC18A3 and SLC5A7 cholinergic transporters. This Mus musculus (Mouse) protein is SEC14-like protein 1.